An 85-amino-acid chain; its full sequence is Antitoxin VapB31 (85 aa).

Functionally, antitoxin component of a type II toxin-antitoxin (TA) system. Upon expression in M.smegmatis neutralizes the effect of cognate toxin VapC31. This Mycobacterium tuberculosis (strain ATCC 25618 / H37Rv) protein is Antitoxin VapB31 (vapB31).